An 845-amino-acid chain; its full sequence is Molybdenum cofactor sulfurase (845 aa).

Lys-240 carries the post-translational modification N6-(pyridoxal phosphate)lysine. The active site involves Cys-404. Residues 666–840 enclose the MOSC domain; sequence SFPQDSSPSS…LMVGDTVTPS (175 aa).

It belongs to the class-V pyridoxal-phosphate-dependent aminotransferase family. MOCOS subfamily. Requires pyridoxal 5'-phosphate as cofactor.

The catalysed reaction is Mo-molybdopterin + L-cysteine + AH2 = thio-Mo-molybdopterin + L-alanine + A + H2O. It participates in cofactor biosynthesis; molybdopterin biosynthesis. Sulfurates the molybdenum cofactor. Sulfation of molybdenum is essential for xanthine dehydrogenase (XDH) and aldehyde oxidase (ADO) enzymes in which molybdenum cofactor is liganded by 1 oxygen and 1 sulfur atom in active form. The sequence is that of Molybdenum cofactor sulfurase from Aspergillus clavatus (strain ATCC 1007 / CBS 513.65 / DSM 816 / NCTC 3887 / NRRL 1 / QM 1276 / 107).